Here is a 190-residue protein sequence, read N- to C-terminus: Pyridoxal 5'-phosphate synthase subunit PdxT (190 aa).

An L-glutamine-binding site is contributed by 46 to 48 (GES). The Nucleophile role is filled by Cys78. L-glutamine is bound by residues Arg106 and 135–136 (IR). Active-site charge relay system residues include His171 and Glu173.

It belongs to the glutaminase PdxT/SNO family. In the presence of PdxS, forms a dodecamer of heterodimers. Only shows activity in the heterodimer.

It catalyses the reaction aldehydo-D-ribose 5-phosphate + D-glyceraldehyde 3-phosphate + L-glutamine = pyridoxal 5'-phosphate + L-glutamate + phosphate + 3 H2O + H(+). The enzyme catalyses L-glutamine + H2O = L-glutamate + NH4(+). It functions in the pathway cofactor biosynthesis; pyridoxal 5'-phosphate biosynthesis. Catalyzes the hydrolysis of glutamine to glutamate and ammonia as part of the biosynthesis of pyridoxal 5'-phosphate. The resulting ammonia molecule is channeled to the active site of PdxS. The chain is Pyridoxal 5'-phosphate synthase subunit PdxT from Dictyoglomus turgidum (strain DSM 6724 / Z-1310).